Here is a 1029-residue protein sequence, read N- to C-terminus: Probable E3 ubiquitin protein ligase C167.07c (1029 aa).

An IQ domain is found at 46–75 (AENNSVAVQSLSRGFLARRKFKQDFRERWI). An HECT domain is found at 692 to 1029 (FGKLLKGPIR…VRSGVGFGFS (338 aa)). Cysteine 997 acts as the Glycyl thioester intermediate in catalysis.

The protein localises to the cytoplasm. It is found in the nucleus. It carries out the reaction S-ubiquitinyl-[E2 ubiquitin-conjugating enzyme]-L-cysteine + [acceptor protein]-L-lysine = [E2 ubiquitin-conjugating enzyme]-L-cysteine + N(6)-ubiquitinyl-[acceptor protein]-L-lysine.. Functionally, probable E3 ubiquitin-protein ligase which mediates ubiquitination and subsequent proteasomal degradation of target proteins. The polypeptide is Probable E3 ubiquitin protein ligase C167.07c (Schizosaccharomyces pombe (strain 972 / ATCC 24843) (Fission yeast)).